The chain runs to 123 residues: Large ribosomal subunit protein uL14 (123 aa).

This sequence belongs to the universal ribosomal protein uL14 family. As to quaternary structure, part of the 50S ribosomal subunit. Forms a cluster with proteins L3 and L19. In the 70S ribosome, L14 and L19 interact and together make contacts with the 16S rRNA in bridges B5 and B8.

In terms of biological role, binds to 23S rRNA. Forms part of two intersubunit bridges in the 70S ribosome. This is Large ribosomal subunit protein uL14 from Photobacterium profundum (strain SS9).